Consider the following 788-residue polypeptide: Endonuclease MutS2 (788 aa).

335 to 342 (GPNTGGKT) contacts ATP. The interval 688–708 (VKSASKTKKRSGGTSITKQSA) is disordered. Over residues 699-708 (GGTSITKQSA) the composition is skewed to polar residues. The Smr domain occupies 713–788 (LDLRGVRVEE…GHGVTIIELK (76 aa)).

It belongs to the DNA mismatch repair MutS family. MutS2 subfamily. As to quaternary structure, homodimer. Binds to stalled ribosomes, contacting rRNA.

Endonuclease that is involved in the suppression of homologous recombination and thus may have a key role in the control of bacterial genetic diversity. Functionally, acts as a ribosome collision sensor, splitting the ribosome into its 2 subunits. Detects stalled/collided 70S ribosomes which it binds and splits by an ATP-hydrolysis driven conformational change. Acts upstream of the ribosome quality control system (RQC), a ribosome-associated complex that mediates the extraction of incompletely synthesized nascent chains from stalled ribosomes and their subsequent degradation. Probably generates substrates for RQC. The sequence is that of Endonuclease MutS2 from Exiguobacterium sibiricum (strain DSM 17290 / CCUG 55495 / CIP 109462 / JCM 13490 / 255-15).